The following is a 442-amino-acid chain: Capsid vertex component 1 (442 aa).

Belongs to the herpesviridae CVC1 protein family. In terms of assembly, interacts (via C-terminus) with capsid vertex component 2/CVC2.

The protein resides in the virion. The protein localises to the host nucleus. Its function is as follows. Capsid vertex-specific component that plays a role during viral DNA encapsidation, assuring correct genome cleavage and presumably stabilizing capsids that contain full-length viral genomes. The protein is Capsid vertex component 1 of Homo sapiens (Human).